We begin with the raw amino-acid sequence, 699 residues long: D-(-)-3-hydroxybutyrate oligomer hydrolase (699 aa).

Residues 1–33 (MTAIRGGSRRAPGLALALLGGVLLGACHGDENA) form the signal peptide. The active-site Charge relay system is Ser311.

It belongs to the D-(-)-3-hydroxybutyrate oligomer hydrolase family.

Its subcellular location is the secreted. It catalyses the reaction (3R)-hydroxybutanoate dimer + H2O = 2 (R)-3-hydroxybutanoate + H(+). It functions in the pathway lipid metabolism; butanoate metabolism. In terms of biological role, participates in the degradation of poly-3-hydroxybutyrate (PHB). It works downstream of poly(3-hydroxybutyrate) depolymerase, hydrolyzing D(-)-3-hydroxybutyrate oligomers of various length (3HB-oligomers) into 3HB-monomers. The protein is D-(-)-3-hydroxybutyrate oligomer hydrolase of Burkholderia mallei (strain ATCC 23344).